We begin with the raw amino-acid sequence, 611 residues long: Glutamine--fructose-6-phosphate aminotransferase [isomerizing] (611 aa).

Catalysis depends on cysteine 2, which acts as the Nucleophile; for GATase activity. The Glutamine amidotransferase type-2 domain maps to 2-219 (CGIVGAVAER…EGDIAEIRRD (218 aa)). SIS domains follow at residues 287-427 (AADL…VRGT) and 460-601 (IAEL…VDQP). Lysine 606 functions as the For Fru-6P isomerization activity in the catalytic mechanism.

Homodimer.

Its subcellular location is the cytoplasm. The enzyme catalyses D-fructose 6-phosphate + L-glutamine = D-glucosamine 6-phosphate + L-glutamate. Its function is as follows. Catalyzes the first step in hexosamine metabolism, converting fructose-6P into glucosamine-6P using glutamine as a nitrogen source. This Pseudomonas putida (strain ATCC 47054 / DSM 6125 / CFBP 8728 / NCIMB 11950 / KT2440) protein is Glutamine--fructose-6-phosphate aminotransferase [isomerizing].